We begin with the raw amino-acid sequence, 463 residues long: Ribosome biogenesis protein NSA1 (463 aa).

Belongs to the NSA1 family. In terms of assembly, component of the pre-66S ribosomal particle. Interacts with NOP7, RRP1 and RRP5.

It is found in the nucleus. The protein localises to the nucleolus. Involved in the biogenesis of the 60S ribosomal subunit. The sequence is that of Ribosome biogenesis protein NSA1 (NSA1) from Saccharomyces cerevisiae (strain ATCC 204508 / S288c) (Baker's yeast).